Consider the following 375-residue polypeptide: Platelet-derived growth factor receptor-like protein (375 aa).

The N-terminal stretch at M1–G21 is a signal peptide. The disordered stretch occupies residues A20–K63. Over residues P40 to P50 the composition is skewed to basic residues. The Ig-like C2-type 1 domain maps to P47–K159. C96 and C143 are joined by a disulfide. N219 is a glycosylation site (N-linked (GlcNAc...) asparagine). Residues P272 to S375 form the Ig-like C2-type 2 domain. The cysteines at positions 293 and 357 are disulfide-linked.

Forms a complex composed of PDGFRL, TNK2 and GRB2.

It localises to the secreted. This Mus musculus (Mouse) protein is Platelet-derived growth factor receptor-like protein (Pdgfrl).